Here is a 1562-residue protein sequence, read N- to C-terminus: DNA-directed RNA polymerase subunit beta'' (1562 aa).

Positions 1–22 are disordered; it reads MVKKKKFKTKNIQNPPFSSQNS. The segment covering 11 to 22 has biased composition (polar residues); it reads NIQNPPFSSQNS. Zn(2+) is bound by residues Cys275, Cys338, Cys345, and Cys348.

It belongs to the RNA polymerase beta' chain family. RpoC2 subfamily. In terms of assembly, in plastids the minimal PEP RNA polymerase catalytic core is composed of four subunits: alpha, beta, beta', and beta''. When a (nuclear-encoded) sigma factor is associated with the core the holoenzyme is formed, which can initiate transcription. It depends on Zn(2+) as a cofactor.

Its subcellular location is the plastid. It localises to the chloroplast. It carries out the reaction RNA(n) + a ribonucleoside 5'-triphosphate = RNA(n+1) + diphosphate. In terms of biological role, DNA-dependent RNA polymerase catalyzes the transcription of DNA into RNA using the four ribonucleoside triphosphates as substrates. The chain is DNA-directed RNA polymerase subunit beta'' from Chlorella vulgaris (Green alga).